A 381-amino-acid polypeptide reads, in one-letter code: Teichoic acid glycerol-phosphate primase (381 aa).

Belongs to the CDP-glycerol glycerophosphotransferase family.

The protein resides in the cell membrane. The catalysed reaction is N-acetyl-beta-D-mannosaminyl-(1-&gt;4)-N-acetyl-alpha-D-glucosaminyl di-trans,octa-cis-undecaprenyl diphosphate + CDP-glycerol = 4-O-[(2R)-glycerylphospho]-N-acetyl-beta-D-mannosaminyl-(1-&gt;4)-N-acetyl-alpha-D-glucosaminyl di-trans,octa-cis-undecaprenyl diphosphate + CMP + H(+). It functions in the pathway cell wall biogenesis; poly(glycerol phosphate) teichoic acid biosynthesis. Its function is as follows. Catalyzes the addition of a single glycerol phosphate residue to the prenoldiphosphate-linked disaccharide, as a primer for polymerisation by TagF. This Bacillus subtilis (strain 168) protein is Teichoic acid glycerol-phosphate primase (tagB).